The primary structure comprises 685 residues: Protein SPT2 homolog (685 aa).

Residues 1-570 (MDFREILMIA…PPLSGYRAAQ (570 aa)) form an important for interaction with DNA region. Lys37 is covalently cross-linked (Glycyl lysine isopeptide (Lys-Gly) (interchain with G-Cter in SUMO2)). Positions 45 to 81 (QAFLKRKEEELRRKALEEKRRKEELVKKRIELKHDKK) form a coiled coil. Positions 79–168 (DKKARAMAKR…PLKSAPPPMN (90 aa)) are disordered. Basic and acidic residues predominate over residues 101–111 (IEEKSKKRQAT). Residues 123-148 (YEMEEENEFLEYNHAESEQEYEEEQE) adopt a coiled-coil conformation. Lys187 participates in a covalent cross-link: Glycyl lysine isopeptide (Lys-Gly) (interchain with G-Cter in SUMO2). Composition is skewed to basic and acidic residues over residues 188 to 209 (VVKK…EFLE) and 260 to 275 (HAEK…EKHL). Disordered regions lie at residues 188–615 (VVKK…QEEI) and 644–685 (SWKE…LKRR). Phosphoserine is present on Ser278. 3 stretches are compositionally biased toward low complexity: residues 317–330 (SSTS…TSAS), 365–385 (SPGV…PSTG), and 402–415 (GSSS…ISGS). The span at 416–431 (KKPTNDSNPSRRTVSG) shows a compositional bias: polar residues. Positions 435–501 (PGQPASSSGG…PGRSISGSIP (67 aa)) are enriched in low complexity. A Phosphoserine modification is found at Ser471. Polar residues predominate over residues 519–529 (GPGQTVSSSGP). Residues 542–553 (ISSKNIISRSSN) are compositionally biased toward low complexity. The tract at residues 571 to 685 (GPQRLPFPTG…RRRAKKLKRR (115 aa)) is important for interaction with histones. Residue Lys582 is modified to N6-acetyllysine. A compositionally biased stretch (acidic residues) spans 587–613 (YEEEDDDDDEYDSEMEDFIEDEGEPQE). Ser599 is modified (phosphoserine). Composition is skewed to basic and acidic residues over residues 644–655 (SWKEQQKEEAKS) and 666–676 (EMRREEEEMQR). A coiled-coil region spans residues 645-685 (WKEQQKEEAKSLRLGMQEDLEEMRREEEEMQRRRAKKLKRR).

This sequence belongs to the SPT2 family. As to quaternary structure, interacts with histones. Interacts with a heterotetrameric complex formed by histone H3 and H4, especially when the histone tetramer is not bound to DNA. Interacts with histone H3.3.

Its subcellular location is the nucleus. The protein localises to the nucleolus. Functionally, histone chaperone that stabilizes pre-existing histone tetramers and regulates replication-independent histone exchange on chromatin. Required for normal chromatin refolding in the coding region of transcribed genes, and for the suppression of spurious transcription. Binds DNA and histones and promotes nucleosome assembly (in vitro). Facilitates formation of tetrameric histone complexes containing histone H3 and H4. Modulates RNA polymerase 1-mediated transcription. Binds DNA, with a preference for branched DNA species, such as Y-form DNA and Holliday junction DNA. This chain is Protein SPT2 homolog (SPTY2D1), found in Homo sapiens (Human).